The following is a 121-amino-acid chain: Large ribosomal subunit protein bL12 (121 aa).

The protein belongs to the bacterial ribosomal protein bL12 family. As to quaternary structure, homodimer. Part of the ribosomal stalk of the 50S ribosomal subunit. Forms a multimeric L10(L12)X complex, where L10 forms an elongated spine to which 2 to 4 L12 dimers bind in a sequential fashion. Binds GTP-bound translation factors.

Its function is as follows. Forms part of the ribosomal stalk which helps the ribosome interact with GTP-bound translation factors. Is thus essential for accurate translation. This is Large ribosomal subunit protein bL12 from Aeromonas hydrophila subsp. hydrophila (strain ATCC 7966 / DSM 30187 / BCRC 13018 / CCUG 14551 / JCM 1027 / KCTC 2358 / NCIMB 9240 / NCTC 8049).